A 329-amino-acid polypeptide reads, in one-letter code: Ubiquitin carboxyl-terminal hydrolase isozyme L5 (329 aa).

A UCH catalytic domain is found at 7–225; the sequence is EWCLMESDPG…IRFNLMAIVS (219 aa). Residue K47 is modified to N6-succinyllysine. The active-site Nucleophile is the C88. K158 bears the N6-acetyllysine mark. The active-site Proton donor is the H164. N6-succinyllysine is present on K289. The 29-residue stretch at 291-319 folds into the ULD domain; sequence NYLPFIMELLKTLAEHQQLIPLVEKAKEK. The interval 313-329 is interaction with ADRM1; it reads VEKAKEKQNAKKAQETK.

The protein belongs to the peptidase C12 family. In terms of assembly, component of the 19S (PA700) regulatory complex of the 26S proteasome. Interacts with ADRM1 and NFRKB. Component of the INO80 complex; specifically part of a complex module associated with N-terminus of INO80.

The protein resides in the cytoplasm. Its subcellular location is the nucleus. The catalysed reaction is Thiol-dependent hydrolysis of ester, thioester, amide, peptide and isopeptide bonds formed by the C-terminal Gly of ubiquitin (a 76-residue protein attached to proteins as an intracellular targeting signal).. Activated by ADRM1. Inhibited by interaction with NFRKB. Functionally, protease that specifically cleaves 'Lys-48'-linked polyubiquitin chains. Deubiquitinating enzyme associated with the 19S regulatory subunit of the 26S proteasome. Putative regulatory component of the INO80 complex; however is inactive in the INO80 complex and is activated by a transient interaction of the INO80 complex with the proteasome via ADRM1. The chain is Ubiquitin carboxyl-terminal hydrolase isozyme L5 (UCHL5) from Sus scrofa (Pig).